A 113-amino-acid chain; its full sequence is Large ribosomal subunit protein bL17 (113 aa).

Belongs to the bacterial ribosomal protein bL17 family. In terms of assembly, part of the 50S ribosomal subunit. Contacts protein L32.

This chain is Large ribosomal subunit protein bL17, found in Clostridium perfringens (strain ATCC 13124 / DSM 756 / JCM 1290 / NCIMB 6125 / NCTC 8237 / Type A).